Here is a 179-residue protein sequence, read N- to C-terminus: ATP synthase subunit delta (179 aa).

Belongs to the ATPase delta chain family. In terms of assembly, F-type ATPases have 2 components, F(1) - the catalytic core - and F(0) - the membrane proton channel. F(1) has five subunits: alpha(3), beta(3), gamma(1), delta(1), epsilon(1). F(0) has three main subunits: a(1), b(2) and c(10-14). The alpha and beta chains form an alternating ring which encloses part of the gamma chain. F(1) is attached to F(0) by a central stalk formed by the gamma and epsilon chains, while a peripheral stalk is formed by the delta and b chains.

It localises to the cell membrane. F(1)F(0) ATP synthase produces ATP from ADP in the presence of a proton or sodium gradient. F-type ATPases consist of two structural domains, F(1) containing the extramembraneous catalytic core and F(0) containing the membrane proton channel, linked together by a central stalk and a peripheral stalk. During catalysis, ATP synthesis in the catalytic domain of F(1) is coupled via a rotary mechanism of the central stalk subunits to proton translocation. Functionally, this protein is part of the stalk that links CF(0) to CF(1). It either transmits conformational changes from CF(0) to CF(1) or is implicated in proton conduction. This chain is ATP synthase subunit delta, found in Metamycoplasma arthritidis (strain 158L3-1) (Mycoplasma arthritidis).